The chain runs to 118 residues: V-type proton ATPase subunit G 3 (118 aa).

Over residues Met-1–Leu-12 the composition is skewed to polar residues. Residues Met-1–Thr-44 form a disordered region. Positions Ser-5 to Lys-53 form a coiled coil. A compositionally biased stretch (basic and acidic residues) spans Ala-14–Lys-26.

This sequence belongs to the V-ATPase G subunit family. In terms of assembly, V-ATPase is a heteromultimeric enzyme made up of two complexes: the ATP-hydrolytic V1 complex and the proton translocation V0 complex. The V1 complex consists of three catalytic AB heterodimers that form a heterohexamer, three peripheral stalks each consisting of EG heterodimers, one central rotor including subunits D and F, and the regulatory subunits C and H. The proton translocation complex V0 consists of the proton transport subunit a, a ring of proteolipid subunits c9c'', rotary subunit d, subunits e and f, and the accessory subunits ATP6AP1/Ac45 and ATP6AP2/PRR. In terms of tissue distribution, kidney.

In terms of biological role, subunit of the V1 complex of vacuolar(H+)-ATPase (V-ATPase), a multisubunit enzyme composed of a peripheral complex (V1) that hydrolyzes ATP and a membrane integral complex (V0) that translocates protons. V-ATPase is responsible for acidifying and maintaining the pH of intracellular compartments and in some cell types, is targeted to the plasma membrane, where it is responsible for acidifying the extracellular environment. The chain is V-type proton ATPase subunit G 3 (Atp6v1g3) from Mus musculus (Mouse).